The chain runs to 796 residues: Nuclear GTPase SLIP-GC (796 aa).

107–114 (GITGAGKS) is a binding site for GTP. 2 coiled-coil regions span residues 158–185 (SDQE…EEAD) and 742–776 (GLCK…LRRS).

It localises to the nucleus speckle. In terms of biological role, nuclear GTPase found in germinal center B-cells, where it may inhibit function of the activation-induced cytidine deaminase AICDA. Reduces somatic hypermutation in B-cells which may enhance genome stability. This Mus musculus (Mouse) protein is Nuclear GTPase SLIP-GC.